A 158-amino-acid polypeptide reads, in one-letter code: Endoribonuclease YbeY (158 aa).

Zn(2+) is bound by residues His-119, His-123, and His-129.

It belongs to the endoribonuclease YbeY family. Requires Zn(2+) as cofactor.

It localises to the cytoplasm. Functionally, single strand-specific metallo-endoribonuclease involved in late-stage 70S ribosome quality control and in maturation of the 3' terminus of the 16S rRNA. The polypeptide is Endoribonuclease YbeY (Shewanella woodyi (strain ATCC 51908 / MS32)).